The sequence spans 541 residues: uncharacterized protein (541 aa).

5 helical membrane-spanning segments follow: residues 10-32, 39-57, 62-84, 91-113, and 146-168; these read LNNQ…KINI, SSAI…YTLP, TLGL…FFSL, LSLG…TYLF, and APAA…IQII. RCK C-terminal domains follow at residues 183–260 and 268–352; these read LNKE…DDLE and TPVD…IFGN. 6 helical membrane-spanning segments follow: residues 357 to 375, 385 to 407, 428 to 447, 452 to 474, 481 to 500, and 515 to 537; these read SYNF…GFIL, SGIF…SNIY, GLVL…ILAT, GLQL…VFIC, PFLS…PGLA, and YATV…IFIV.

This sequence belongs to the AAE transporter (TC 2.A.81) family.

It is found in the cell membrane. This is an uncharacterized protein from Desulfotalea psychrophila (strain LSv54 / DSM 12343).